The sequence spans 140 residues: Transcription antitermination protein NusB (140 aa).

It belongs to the NusB family.

In terms of biological role, involved in transcription antitermination. Required for transcription of ribosomal RNA (rRNA) genes. Binds specifically to the boxA antiterminator sequence of the ribosomal RNA (rrn) operons. In Elusimicrobium minutum (strain Pei191), this protein is Transcription antitermination protein NusB.